Reading from the N-terminus, the 178-residue chain is MPRVELEIPEDVDAEQDHLDITVEGDNGSVTRRLWYPDIDVSVDGDTVVIESDEDNAKTMSTIGTFQSHIENMFHGVTEGWEYGMEVFYSHFPMQVNVEGDEVVIENFLGEKAPRRTTIHGDTDVEIDGEELTVSGPDIEAVGQTAADIEQLTRINDKDVRVFQDGVYITRKPNRGDA.

It belongs to the universal ribosomal protein uL6 family. As to quaternary structure, part of the 50S ribosomal subunit. Interacts weakly with protein L13.

Its function is as follows. This protein binds to the 23S rRNA, and is important in its secondary structure. It is located near the subunit interface in the base of the L7/L12 stalk, and near the tRNA binding site of the peptidyltransferase center. The chain is Large ribosomal subunit protein uL6 from Haloarcula marismortui (strain ATCC 43049 / DSM 3752 / JCM 8966 / VKM B-1809) (Halobacterium marismortui).